The primary structure comprises 151 residues: Chaperonin GroEL (151 aa).

41 to 45 lines the ATP pocket; sequence DGTTT.

Belongs to the chaperonin (HSP60) family. As to quaternary structure, forms a cylinder of 14 subunits composed of two heptameric rings stacked back-to-back. Interacts with the co-chaperonin GroES.

The protein resides in the cytoplasm. It catalyses the reaction ATP + H2O + a folded polypeptide = ADP + phosphate + an unfolded polypeptide.. Its function is as follows. Together with its co-chaperonin GroES, plays an essential role in assisting protein folding. The GroEL-GroES system forms a nano-cage that allows encapsulation of the non-native substrate proteins and provides a physical environment optimized to promote and accelerate protein folding. This Mycobacterium avium protein is Chaperonin GroEL.